The primary structure comprises 409 residues: MIEVLLVTICLAAFPYQGSSIILESGNVNDYEVVYPRKVTALPKGAVQPKYEDAMQYELKVNGEPVVLHLEKNKGLFSKDYSETHYSPDGREITTYPPVEDHCYYHGRIENDADSTASISACNGLKGHFKLQGETYLIEPLKLSDSEAHAVFKFENVEKEDEAPKMCGVTQNWESYEPIKKASQSNLTPEHQRYIELFIVVDHGMFMKYNGNSDKIRRRIHQMVNIMKEAYRYLYIDIALTGVEIWSNKDMINVQPAAPQTLDSFGEWRKTDLLNRKSHDNAQLLTNTDFDGPTIGLAYVGTMCDPKLSTGVIQDHSPINLLVAVTMAHELGHNLGISHDTDSCSCGGYSCIMAPEISHEPSKYFSDCSYIQCWDFIMKENPQCILNKRLRTDTVSTPVSGNELLEAGE.

A signal peptide spans 1-20 (MIEVLLVTICLAAFPYQGSS). The propeptide occupies 21-189 (IILESGNVND…KKASQSNLTP (169 aa)). The region spanning 193–389 (RYIELFIVVD…ENPQCILNKR (197 aa)) is the Peptidase M12B domain. Ca(2+) is bound by residues Glu196 and Asp280. 3 cysteine pairs are disulfide-bonded: Cys304/Cys384, Cys344/Cys368, and Cys346/Cys351. His329 is a binding site for Zn(2+). The active site involves Glu330. Residues His333 and His339 each contribute to the Zn(2+) site. Ca(2+)-binding residues include Cys384, Asn387, Val399, Asn402, Leu404, Glu406, and Glu409. Positions 390 to 409 (LRTDTVSTPVSGNELLEAGE) are excised as a propeptide.

The protein belongs to the venom metalloproteinase (M12B) family. P-I subfamily. As to quaternary structure, monomer. Zn(2+) is required as a cofactor. Expressed by the venom gland.

Its subcellular location is the secreted. Functionally, snake venom metalloproteinase that impairs hemostasis in the envenomed animal. The protein is Snake venom metalloproteinase BITM02A of Bothrops insularis (Golden lancehead).